The primary structure comprises 142 residues: Trafficking protein particle complex subunit 1 (142 aa).

The protein belongs to the TRAPP small subunits family. BET5 subfamily. As to quaternary structure, part of the multisubunit TRAPP (transport protein particle) complex.

It is found in the golgi apparatus. The protein localises to the cis-Golgi network. The protein resides in the endoplasmic reticulum. Its function is as follows. May play a role in vesicular transport from endoplasmic reticulum to Golgi. The chain is Trafficking protein particle complex subunit 1 (trappc1-1) from Dictyostelium discoideum (Social amoeba).